The sequence spans 133 residues: MGMTSDTIADLLTRIRNALKAEHLYVDLEHSKMRESIVKILKHHGFLARYLVKEENRKRTMRIFLQYSDDRRPVIRQLKRVSKPSRRVYVPAAKIPYVFGNMGISVLSTSQGVLDGSTARAKNIGGELLCLVW.

This sequence belongs to the universal ribosomal protein uS8 family. As to quaternary structure, part of the 30S ribosomal subunit. Contacts proteins S5 and S12.

Its function is as follows. One of the primary rRNA binding proteins, it binds directly to 16S rRNA central domain where it helps coordinate assembly of the platform of the 30S subunit. This chain is Small ribosomal subunit protein uS8, found in Chlamydia felis (strain Fe/C-56) (Chlamydophila felis).